The following is a 506-amino-acid chain: Beta-glucosidase 9 (506 aa).

A signal peptide spans methionine 1–alanine 22. Residues glutamine 42, histidine 139, and asparagine 184 to glutamate 185 each bind a beta-D-glucoside. Glutamate 185 (proton donor) is an active-site residue. A disulfide bond links cysteine 204 and cysteine 212. Residues asparagine 211 and asparagine 216 are each glycosylated (N-linked (GlcNAc...) asparagine). Tyrosine 328 provides a ligand contact to a beta-D-glucoside. N-linked (GlcNAc...) asparagine glycosylation is present at asparagine 363. Glutamate 396 serves as a coordination point for a beta-D-glucoside. Catalysis depends on glutamate 396, which acts as the Nucleophile. A glycan (N-linked (GlcNAc...) asparagine) is linked at asparagine 429. A beta-D-glucoside is bound by residues tryptophan 439 and phenylalanine 455. N-linked (GlcNAc...) asparagine glycosylation is found at asparagine 461, asparagine 483, and asparagine 499.

This sequence belongs to the glycosyl hydrolase 1 family.

The catalysed reaction is Hydrolysis of terminal, non-reducing beta-D-glucosyl residues with release of beta-D-glucose.. The protein is Beta-glucosidase 9 of Arabidopsis thaliana (Mouse-ear cress).